The following is a 501-amino-acid chain: Ectoine/hydroxyectoine transporter (501 aa).

12 helical membrane passes run 9–29, 45–65, 86–106, 137–157, 190–210, 220–240, 258–278, 311–331, 343–363, 395–415, 441–461, and 465–485; these read PVFY…ATLP, IHFG…LITL, FFTW…VFWG, AFFH…LVIA, LAVI…ILQM, VPTS…TYLI, LGSL…VFIL, WTIF…AFIA, VLGV…AFGG, LPMT…FLVT, IVWG…GGLE, and TASL…MASF.

This sequence belongs to the BCCT transporter (TC 2.A.15) family.

It is found in the cell inner membrane. In terms of biological role, mediates the import of ectoine and hydroxyectoine, which function as osmotic and cold stress protectants. Also has minor uptake activities for the compatible solutes proline and glycine betaine. The protein is Ectoine/hydroxyectoine transporter of Virgibacillus pantothenticus.